A 342-amino-acid polypeptide reads, in one-letter code: Protein RecA (342 aa).

65 to 72 (GPESSGKT) lines the ATP pocket.

The protein belongs to the RecA family.

The protein localises to the cytoplasm. Can catalyze the hydrolysis of ATP in the presence of single-stranded DNA, the ATP-dependent uptake of single-stranded DNA by duplex DNA, and the ATP-dependent hybridization of homologous single-stranded DNAs. It interacts with LexA causing its activation and leading to its autocatalytic cleavage. In Teredinibacter turnerae (strain ATCC 39867 / T7901), this protein is Protein RecA.